The chain runs to 468 residues: Aldehyde dehydrogenase family 3 member B1 (468 aa).

M1 bears the N-acetylmethionine mark. 188 to 193 (GNTYVG) lines the NAD(+) pocket. Residues E210 and C244 contribute to the active site. S-palmitoyl cysteine attachment occurs at residues C462 and C463. A Cysteine methyl ester modification is found at C465. C465 carries S-geranylgeranyl cysteine lipidation. Positions 466-468 (TLL) are cleaved as a propeptide — removed in mature form.

This sequence belongs to the aldehyde dehydrogenase family. Dually lipidated in the C-terminus; prenylation occurs prior to, and is a prerequisite for palmitoylation. It is also required for activity towards long-chain substrates.

The protein resides in the cell membrane. It catalyses the reaction an aldehyde + NAD(+) + H2O = a carboxylate + NADH + 2 H(+). It carries out the reaction a long-chain fatty aldehyde + NAD(+) + H2O = a long-chain fatty acid + NADH + 2 H(+). The catalysed reaction is a medium-chain fatty aldehyde + NAD(+) + H2O = a medium-chain fatty acid + NADH + 2 H(+). The enzyme catalyses octanal + NAD(+) + H2O = octanoate + NADH + 2 H(+). It catalyses the reaction nonanal + NAD(+) + H2O = nonanoate + NADH + 2 H(+). It carries out the reaction hexadecanoate + NADH + 2 H(+) = hexadecanal + NAD(+) + H2O. The catalysed reaction is (2E)-octenal + NAD(+) + H2O = (2E)-octenoate + NADH + 2 H(+). The enzyme catalyses (E)-non-2-enal + NAD(+) + H2O = (E)-non-2-enoate + NADH + 2 H(+). It catalyses the reaction (E)-4-hydroxynon-2-enal + NAD(+) + H2O = (E)-4-hydroxynon-2-enoate + NADH + 2 H(+). It carries out the reaction (2E)-hexadecenal + NAD(+) + H2O = (E)-hexadec-2-enoate + NADH + 2 H(+). The catalysed reaction is benzaldehyde + NAD(+) + H2O = benzoate + NADH + 2 H(+). The enzyme catalyses an aldehyde + NADP(+) + H2O = a carboxylate + NADPH + 2 H(+). It catalyses the reaction a medium-chain fatty aldehyde + NADP(+) + H2O = a medium-chain fatty acid + NADPH + 2 H(+). It carries out the reaction hexanal + NADP(+) + H2O = hexanoate + NADPH + 2 H(+). The catalysed reaction is octanal + NADP(+) + H2O = octanoate + NADPH + 2 H(+). The enzyme catalyses nonanal + NADP(+) + H2O = nonanoate + NADPH + 2 H(+). It catalyses the reaction (2E)-octenal + NADP(+) + H2O = (2E)-octenoate + NADPH + 2 H(+). It carries out the reaction (E)-non-2-enal + NADP(+) + H2O = (E)-non-2-enoate + NADPH + 2 H(+). The catalysed reaction is (E)-4-hydroxynon-2-enal + NADP(+) + H2O = (E)-4-hydroxynon-2-enoate + NADPH + 2 H(+). The enzyme catalyses benzaldehyde + NADP(+) + H2O = benzoate + NADPH + 2 H(+). The protein operates within alcohol metabolism; ethanol degradation; acetate from ethanol: step 2/2. In terms of biological role, oxidizes medium and long chain saturated and unsaturated fatty aldehydes generated in the plasma membrane into non-toxic fatty acids. May have a protective role against the cytotoxicity induced by lipid peroxidation. Short-chain fatty aldehydes are not good substrates. Can use both NADP(+) and NAD(+) as electron acceptor in vitro, however in vivo preference will depend on their tissue levels. Low activity towards acetaldehyde and 3,4-dihydroxyphenylacetaldehyde. Able to metabolize aromatic aldehydes such as benzaldehyde to their acid form. The polypeptide is Aldehyde dehydrogenase family 3 member B1 (Aldh3b1) (Rattus norvegicus (Rat)).